Here is a 193-residue protein sequence, read N- to C-terminus: dTTP/UTP pyrophosphatase (193 aa).

Catalysis depends on D75, which acts as the Proton acceptor.

Belongs to the Maf family. YhdE subfamily. Requires a divalent metal cation as cofactor.

The protein localises to the cytoplasm. The catalysed reaction is dTTP + H2O = dTMP + diphosphate + H(+). The enzyme catalyses UTP + H2O = UMP + diphosphate + H(+). Its function is as follows. Nucleoside triphosphate pyrophosphatase that hydrolyzes dTTP and UTP. May have a dual role in cell division arrest and in preventing the incorporation of modified nucleotides into cellular nucleic acids. The chain is dTTP/UTP pyrophosphatase from Chlorobium luteolum (strain DSM 273 / BCRC 81028 / 2530) (Pelodictyon luteolum).